The following is a 448-amino-acid chain: Ribosomal protein uS12 methylthiotransferase RimO (448 aa).

In terms of domain architecture, MTTase N-terminal spans 16-126 (PRISFVSLGC…VVAAVHEAVP (111 aa)). [4Fe-4S] cluster-binding residues include cysteine 25, cysteine 61, cysteine 90, cysteine 157, cysteine 161, and cysteine 164. Residues 143–380 (LTPRHYAYLK…MEAQSHVSLR (238 aa)) enclose the Radical SAM core domain. The 66-residue stretch at 383 to 448 (RAKVGKRLSV…DAYDLHGIAV (66 aa)) folds into the TRAM domain.

It belongs to the methylthiotransferase family. RimO subfamily. It depends on [4Fe-4S] cluster as a cofactor.

It is found in the cytoplasm. It catalyses the reaction L-aspartate(89)-[ribosomal protein uS12]-hydrogen + (sulfur carrier)-SH + AH2 + 2 S-adenosyl-L-methionine = 3-methylsulfanyl-L-aspartate(89)-[ribosomal protein uS12]-hydrogen + (sulfur carrier)-H + 5'-deoxyadenosine + L-methionine + A + S-adenosyl-L-homocysteine + 2 H(+). Catalyzes the methylthiolation of an aspartic acid residue of ribosomal protein uS12. The sequence is that of Ribosomal protein uS12 methylthiotransferase RimO from Methylorubrum extorquens (strain PA1) (Methylobacterium extorquens).